The following is a 682-amino-acid chain: Potassium-transporting ATPase ATP-binding subunit (682 aa).

Transmembrane regions (helical) follow at residues 34–54 (PVMFIVWIGSLLTTFISIAMA), 62–82 (ALFSAAISAWLWVTVLFANFA), 219–239 (IALTILLIALTIVFLLATATL), and 254–274 (VLVALLVCLIPTTIGGLLSAI). Residue Asp-307 is the 4-aspartylphosphate intermediate of the active site. Residues Asp-344, Glu-348, 377–384 (FTAQSRMS), and Lys-395 contribute to the ATP site. Mg(2+)-binding residues include Asp-518 and Asp-522. 3 helical membrane-spanning segments follow: residues 588–608 (FAIIPAAFAATYPQLNALNIM), 616–636 (AILSAVIFNALIIVFLIPLAL), and 656–676 (IYGLGGLLVPFIGIKVIDLLL).

This sequence belongs to the cation transport ATPase (P-type) (TC 3.A.3) family. Type IA subfamily. In terms of assembly, the system is composed of three essential subunits: KdpA, KdpB and KdpC.

Its subcellular location is the cell inner membrane. It carries out the reaction K(+)(out) + ATP + H2O = K(+)(in) + ADP + phosphate + H(+). Functionally, part of the high-affinity ATP-driven potassium transport (or Kdp) system, which catalyzes the hydrolysis of ATP coupled with the electrogenic transport of potassium into the cytoplasm. This subunit is responsible for energy coupling to the transport system and for the release of the potassium ions to the cytoplasm. The chain is Potassium-transporting ATPase ATP-binding subunit from Escherichia coli (strain SMS-3-5 / SECEC).